The sequence spans 223 residues: Translation initiation factor 6 (223 aa).

Belongs to the eIF-6 family.

Its function is as follows. Binds to the 50S ribosomal subunit and prevents its association with the 30S ribosomal subunit to form the 70S initiation complex. This Thermofilum pendens (strain DSM 2475 / Hrk 5) protein is Translation initiation factor 6.